Consider the following 166-residue polypeptide: Probable dual specificity protein phosphatase H1 homolog (166 aa).

One can recognise a Tyrosine-protein phosphatase domain in the interval 25-166 (DITKITDYVY…FLNQIIDKYI (142 aa)). Residue Cys108 is the Phosphocysteine intermediate of the active site.

The protein belongs to the protein-tyrosine phosphatase family. Non-receptor class dual specificity subfamily. In terms of assembly, homodimer.

It is found in the virion. Its subcellular location is the host cytoplasm. The enzyme catalyses O-phospho-L-tyrosyl-[protein] + H2O = L-tyrosyl-[protein] + phosphate. It catalyses the reaction O-phospho-L-seryl-[protein] + H2O = L-seryl-[protein] + phosphate. Functionally, serine/Tyrosine phosphatase which down-regulates cellular antiviral response by dephosphorylating activated STAT1 and blocking interferon (IFN)-stimulated innate immune responses. The polypeptide is Probable dual specificity protein phosphatase H1 homolog (Vertebrata (FPV)).